The primary structure comprises 328 residues: WUSCHEL-related homeobox 6 (328 aa).

Residues 1 to 11 show a composition bias toward polar residues; sequence MEGSSNSPDRQ. The tract at residues 1-45 is disordered; the sequence is MEGSSNSPDRQSSGGSPPEERGGGGSGGGGGRSAAGEPVRSRWTP. Over residues 23–33 the composition is skewed to gly residues; it reads GGGSGGGGGRS. A DNA-binding region (homeobox; WUS-type) is located at residues 38 to 102; the sequence is PVRSRWTPKP…NRRSRSRRRQ (65 aa).

This sequence belongs to the WUS homeobox family.

It is found in the nucleus. Functionally, transcription factor which may be involved in developmental processes. The protein is WUSCHEL-related homeobox 6 (WOX6) of Oryza sativa subsp. japonica (Rice).